Reading from the N-terminus, the 549-residue chain is Mitogen-activated protein kinase 15 (549 aa).

The ubiquitin-conjugating stretch occupies residues methionine 1–leucine 20. The Protein kinase domain maps to tyrosine 14–valine 305. ATP is bound by residues leucine 20–valine 28 and lysine 43. The Proton acceptor role is filled by aspartate 138. Position 176 is a phosphothreonine (threonine 176). A TXY motif is present at residues threonine 176–tyrosine 178. Tyrosine 178 is subject to Phosphotyrosine. A necessary to interact with ESRRA, to regulate its subcellular localization and to inhibit its transcriptional activity region spans residues leucine 266 to leucine 286. Positions glutamine 301–valine 382 are requires for interaction with GABARAP, MAP1LC3B AND GABARAPL1. The interval alanine 370–phenylalanine 507 is disordered. 2 PXXXP motif repeats span residues serine 380–proline 384 and proline 387–proline 391. 2 PXXXP motif; regulates binding with chromatin and interaction with PCNA repeats span residues arginine 395–proline 399 and proline 403–proline 407. The segment covering proline 403–serine 416 has biased composition (basic and acidic residues). The residue at position 451 (arginine 451) is an Omega-N-methylarginine. The segment covering serine 456–asparagine 467 has biased composition (polar residues). Residues alanine 483–arginine 492 are compositionally biased toward low complexity. The span at leucine 493–proline 502 shows a compositional bias: basic and acidic residues.

The protein belongs to the protein kinase superfamily. CMGC Ser/Thr protein kinase family. MAP kinase subfamily. Interacts with TGFB1I1. Interacts with CSK/c-Src, ABL1 and RET. Interacts with GABARAP, MAP1LC3B and GABARAPL1; controls, in a kinase-dependent fashion, both basal and starvation-induced autophagy. Interacts with ESRRA; promotes re-localization of ESRRA to the cytoplasm through a XPO1-dependent mechanism then inhibits ESRRA transcriptional activity. Interacts with PCNA; the interaction is chromatin binding- and kinase activity-dependent and prevents MDM2-mediated PCNA destruction by inhibiting the association of PCNA with MDM2. Interacts with DVL2. Interacts with CLIC3; MAPK15 does not phosphorylates CLIC3. Autophosphorylated on Thr-176 and Tyr-178; activates the enzyme. Post-translationally, ubiquitinated. Ubiquitination may allow its tight kinase activity regulation and rapid turnover. May be ubiquitinated by a SCF E3 ligase. In terms of tissue distribution, expressed at all stages of oocyte meiotic maturation.

The protein resides in the cytoplasm. It localises to the cytoskeleton. It is found in the cilium basal body. Its subcellular location is the cell junction. The protein localises to the tight junction. The protein resides in the microtubule organizing center. It localises to the centrosome. It is found in the centriole. Its subcellular location is the cytoplasmic vesicle. The protein localises to the autophagosome. The protein resides in the golgi apparatus. It localises to the nucleus. It is found in the spindle. It catalyses the reaction L-seryl-[protein] + ATP = O-phospho-L-seryl-[protein] + ADP + H(+). It carries out the reaction L-threonyl-[protein] + ATP = O-phospho-L-threonyl-[protein] + ADP + H(+). Its activity is regulated as follows. Activated by threonine and tyrosine phosphorylation. Inhibited by dual specificity phosphatases, such as DUSP1. Phosphorylation and activation in response to DNA damaging agents, serum stimulation. Constitutively activated when phosphorylated on Tyr-178. Activity depends on the relative rates of MAPK15 autophosphorylation and dephosphorylation by PTPN1. Atypical MAPK protein that regulates several process such as autophagy, ciliogenesis, protein trafficking/secretion and genome integrity, in a kinase activity-dependent manner. Controls both, basal and starvation-induced autophagy throught its interaction with GABARAP, MAP1LC3B and GABARAPL1 leading to autophagosome formation, SQSTM1 degradation and reduced MAP1LC3B inhibitory phosphorylation. Regulates primary cilium formation and the localization of ciliary proteins involved in cilium structure, transport, and signaling. Prevents the relocation of the sugar-adding enzymes from the Golgi to the endoplasmic reticulum, thereby restricting the production of sugar-coated proteins. Upon amino-acid starvation, mediates transitional endoplasmic reticulum site disassembly and inhibition of secretion. Binds to chromatin leading to MAPK15 activation and interaction with PCNA, that which protects genomic integrity by inhibiting MDM2-mediated degradation of PCNA. Regulates DA transporter (DAT) activity and protein expression via activation of RhoA. In response to H(2)O(2) treatment phosphorylates ELAVL1, thus preventing it from binding to the PDCD4 3'UTR and rendering the PDCD4 mRNA accessible to miR-21 and leading to its degradation and loss of protein expression. Also functions in a kinase activity-independent manner as a negative regulator of growth. Phosphorylates in vitro FOS and MBP. During oocyte maturation, plays a key role in the microtubule organization and meiotic cell cycle progression in oocytes, fertilized eggs, and early embryos. Interacts with ESRRA promoting its re-localization from the nucleus to the cytoplasm and then prevents its transcriptional activity. The polypeptide is Mitogen-activated protein kinase 15 (Mus musculus (Mouse)).